We begin with the raw amino-acid sequence, 163 residues long: Nucleotide-binding protein HS_0688 (163 aa).

This sequence belongs to the YajQ family.

Nucleotide-binding protein. The sequence is that of Nucleotide-binding protein HS_0688 from Histophilus somni (strain 129Pt) (Haemophilus somnus).